The sequence spans 215 residues: Adenylate kinase (215 aa).

10 to 15 (GAGKGT) is an ATP binding site. The segment at 30–59 (STGDMLRAAIKAGTPLGLEAKKIIDEGGLV) is NMP. Residues Thr-31, Arg-36, 57 to 59 (GLV), 85 to 88 (GFPR), and Gln-92 contribute to the AMP site. The tract at residues 122–159 (GRRVHLASGRTYHVTYNPPKVEGKDDVTGEDLIQRDDD) is LID. ATP-binding positions include Arg-123 and 132 to 133 (TY). AMP is bound by residues Arg-156 and Arg-167. Gln-200 lines the ATP pocket.

The protein belongs to the adenylate kinase family. In terms of assembly, monomer.

The protein resides in the cytoplasm. It catalyses the reaction AMP + ATP = 2 ADP. The protein operates within purine metabolism; AMP biosynthesis via salvage pathway; AMP from ADP: step 1/1. Functionally, catalyzes the reversible transfer of the terminal phosphate group between ATP and AMP. Plays an important role in cellular energy homeostasis and in adenine nucleotide metabolism. This is Adenylate kinase from Neisseria meningitidis serogroup B (strain ATCC BAA-335 / MC58).